The sequence spans 317 residues: Acetyl-coenzyme A carboxylase carboxyl transferase subunit alpha (317 aa).

Residues 33-294 form the CoA carboxyltransferase C-terminal domain; the sequence is NLDDEITRLQ…KKRLLADLAD (262 aa).

This sequence belongs to the AccA family. Acetyl-CoA carboxylase is a heterohexamer composed of biotin carboxyl carrier protein (AccB), biotin carboxylase (AccC) and two subunits each of ACCase subunit alpha (AccA) and ACCase subunit beta (AccD).

It is found in the cytoplasm. The catalysed reaction is N(6)-carboxybiotinyl-L-lysyl-[protein] + acetyl-CoA = N(6)-biotinyl-L-lysyl-[protein] + malonyl-CoA. The protein operates within lipid metabolism; malonyl-CoA biosynthesis; malonyl-CoA from acetyl-CoA: step 1/1. In terms of biological role, component of the acetyl coenzyme A carboxylase (ACC) complex. First, biotin carboxylase catalyzes the carboxylation of biotin on its carrier protein (BCCP) and then the CO(2) group is transferred by the carboxyltransferase to acetyl-CoA to form malonyl-CoA. The polypeptide is Acetyl-coenzyme A carboxylase carboxyl transferase subunit alpha (Histophilus somni (strain 2336) (Haemophilus somnus)).